The primary structure comprises 183 residues: Transposon gamma-delta resolvase (183 aa).

The Resolvase/invertase-type recombinase catalytic domain occupies 2–137 (RLFGYARVST…EGRQEAMAKG (136 aa)). S10 (O-(5'-phospho-DNA)-serine intermediate) is an active-site residue. The H-T-H motif DNA-binding region spans 161 to 180 (ASHISKTMNIARSTVYKVIN).

The protein belongs to the site-specific recombinase resolvase family.

In terms of biological role, this protein catalyzes the site-specific recombination of the transposon and also regulates its frequency of transposition. The chain is Transposon gamma-delta resolvase (tnpR) from Escherichia coli (strain K12).